A 178-amino-acid chain; its full sequence is Cytochrome c-type biogenesis protein CcmE (178 aa).

The Cytoplasmic segment spans residues Met-1–Arg-8. A helical; Signal-anchor for type II membrane protein transmembrane segment spans residues Leu-9–Ala-29. The Periplasmic portion of the chain corresponds to Leu-30–Tyr-178. Heme contacts are provided by His-143 and Tyr-147. The disordered stretch occupies residues Glu-154–Tyr-178. Positions Gly-157 to Tyr-178 are enriched in basic and acidic residues.

It belongs to the CcmE/CycJ family.

The protein localises to the cell inner membrane. Functionally, heme chaperone required for the biogenesis of c-type cytochromes. Transiently binds heme delivered by CcmC and transfers the heme to apo-cytochromes in a process facilitated by CcmF and CcmH. In Colwellia psychrerythraea (strain 34H / ATCC BAA-681) (Vibrio psychroerythus), this protein is Cytochrome c-type biogenesis protein CcmE.